The sequence spans 338 residues: F420-dependent glucose-6-phosphate dehydrogenase (338 aa).

Aspartate 40 serves as a coordination point for coenzyme F420-(gamma-Glu)n. Histidine 41 (proton donor) is an active-site residue. Coenzyme F420-(gamma-Glu)n contacts are provided by residues threonine 77 and 108 to 109 (TG). Glutamate 110 acts as the Proton acceptor in catalysis. Coenzyme F420-(gamma-Glu)n-binding positions include asparagine 113, 178-179 (GG), and 181-182 (VV). Substrate contacts are provided by threonine 196, lysine 199, lysine 260, and arginine 284.

The protein belongs to the F420-dependent glucose-6-phosphate dehydrogenase family. Homodimer.

It catalyses the reaction oxidized coenzyme F420-(gamma-L-Glu)(n) + D-glucose 6-phosphate + H(+) = 6-phospho-D-glucono-1,5-lactone + reduced coenzyme F420-(gamma-L-Glu)(n). In terms of biological role, catalyzes the coenzyme F420-dependent oxidation of glucose 6-phosphate (G6P) to 6-phosphogluconolactone. This chain is F420-dependent glucose-6-phosphate dehydrogenase, found in Gordonia bronchialis (strain ATCC 25592 / DSM 43247 / BCRC 13721 / JCM 3198 / KCTC 3076 / NBRC 16047 / NCTC 10667) (Rhodococcus bronchialis).